A 347-amino-acid polypeptide reads, in one-letter code: Probable nitronate monooxygenase (347 aa).

Residues Asn-69, Gln-171, Gly-176, Gly-213, and Gln-232–Ser-235 contribute to the FMN site.

Belongs to the nitronate monooxygenase family. NMO class I subfamily. The cofactor is FMN.

It catalyses the reaction 3 propionate 3-nitronate + 3 O2 + H2O = 3 3-oxopropanoate + 2 nitrate + nitrite + H2O2 + 3 H(+). Nitronate monooxygenase that uses molecular oxygen to catalyze the oxidative denitrification of alkyl nitronates. Acts on propionate 3-nitronate (P3N), the presumed physiological substrate. Probably functions in the detoxification of P3N, a metabolic poison produced by plants and fungi as a defense mechanism. The sequence is that of Probable nitronate monooxygenase (yrpB) from Bacillus subtilis (strain 168).